The following is a 225-amino-acid chain: MMTWSQMSFSDMNSPIMEQMVFFHDHSMMIILMITILTIYMITNIMMNNLLSRSMMEGQEIEIIWTIIPAITLIFIAIPSLHLLYLTDETFNSQISIKVLGHQWYWSYEYSDFNKEFDSFMIPEPEMMKNSFRLLDTDNNLVIPINTNIKYLISSMDVIHSWTIPSLGIKMDAVPGRLNQSFSISSRPGLYYGQCSEICGANHSFMPISLGVTSMKNFINFINSS.

Residues 1–26 (MMTWSQMSFSDMNSPIMEQMVFFHDH) are Mitochondrial intermembrane-facing. The helical transmembrane segment at 27–48 (SMMIILMITILTIYMITNIMMN) threads the bilayer. At 49-62 (NLLSRSMMEGQEIE) the chain is on the mitochondrial matrix side. A helical transmembrane segment spans residues 63–82 (IIWTIIPAITLIFIAIPSLH). The Mitochondrial intermembrane segment spans residues 83 to 225 (LLYLTDETFN…KNFINFINSS (143 aa)). Positions 160, 195, 197, 199, 203, and 206 each coordinate Cu cation. Residue Glu-197 coordinates Mg(2+).

Belongs to the cytochrome c oxidase subunit 2 family. In terms of assembly, component of the cytochrome c oxidase (complex IV, CIV), a multisubunit enzyme composed of a catalytic core of 3 subunits and several supernumerary subunits. The complex exists as a monomer or a dimer and forms supercomplexes (SCs) in the inner mitochondrial membrane with ubiquinol-cytochrome c oxidoreductase (cytochrome b-c1 complex, complex III, CIII). Cu cation is required as a cofactor.

It localises to the mitochondrion inner membrane. The enzyme catalyses 4 Fe(II)-[cytochrome c] + O2 + 8 H(+)(in) = 4 Fe(III)-[cytochrome c] + 2 H2O + 4 H(+)(out). In terms of biological role, component of the cytochrome c oxidase, the last enzyme in the mitochondrial electron transport chain which drives oxidative phosphorylation. The respiratory chain contains 3 multisubunit complexes succinate dehydrogenase (complex II, CII), ubiquinol-cytochrome c oxidoreductase (cytochrome b-c1 complex, complex III, CIII) and cytochrome c oxidase (complex IV, CIV), that cooperate to transfer electrons derived from NADH and succinate to molecular oxygen, creating an electrochemical gradient over the inner membrane that drives transmembrane transport and the ATP synthase. Cytochrome c oxidase is the component of the respiratory chain that catalyzes the reduction of oxygen to water. Electrons originating from reduced cytochrome c in the intermembrane space (IMS) are transferred via the dinuclear copper A center (CU(A)) of subunit 2 and heme A of subunit 1 to the active site in subunit 1, a binuclear center (BNC) formed by heme A3 and copper B (CU(B)). The BNC reduces molecular oxygen to 2 water molecules using 4 electrons from cytochrome c in the IMS and 4 protons from the mitochondrial matrix. The protein is Cytochrome c oxidase subunit 2 (COII) of Rhipicephalus sanguineus (Brown dog tick).